A 285-amino-acid polypeptide reads, in one-letter code: Methyltransferase grgD (285 aa).

The protein belongs to the methyltransferase superfamily. LaeA methyltransferase family.

It functions in the pathway secondary metabolite biosynthesis. In terms of biological role, methyltransferase; part of the gene cluster that mediates the biosynthesis of gregatin A, a fungal polyketide featuring an alkylated furanone core. The PKS grgA synthesizes C11 and C4 polyketide chains in the presence and absence of the trans-enoyl reductase grgB, respectively. The polyketide transferase grgF is then responsible for the fusion of the two carbon chains to produce the furanone skeleton of gregatin A. Next, the cytochrome P450 monooxygenase grgG accepts performs the oxidative cyclization to furnish the gregatin scaffold and leads to the formation of desmethylgregatin A. Finally, the O-methyltransferase grgD methylates the carboxyl group of desmethylgregatin A to provide gregatin A. The sequence is that of Methyltransferase grgD from Penicillium sp.